Here is a 177-residue protein sequence, read N- to C-terminus: Large ribosomal subunit protein uL6 (177 aa).

This sequence belongs to the universal ribosomal protein uL6 family. Part of the 50S ribosomal subunit.

This protein binds to the 23S rRNA, and is important in its secondary structure. It is located near the subunit interface in the base of the L7/L12 stalk, and near the tRNA binding site of the peptidyltransferase center. In Methanococcoides burtonii (strain DSM 6242 / NBRC 107633 / OCM 468 / ACE-M), this protein is Large ribosomal subunit protein uL6.